The chain runs to 227 residues: Prolactin (227 aa).

A signal peptide spans 1 to 28; it reads MDSKWSRRTGSLLLLLVSNLLLCKSTAS. Cysteine 32 and cysteine 39 are joined by a disulfide. Serine 54, serine 62, and serine 118 each carry phosphoserine. Cystine bridges form between cysteine 86–cysteine 202 and cysteine 219–cysteine 227.

It belongs to the somatotropin/prolactin family. In terms of assembly, interacts with PRLR.

It is found in the secreted. In terms of biological role, prolactin acts primarily on the mammary gland by promoting lactation. The sequence is that of Prolactin (PRL) from Oryctolagus cuniculus (Rabbit).